The chain runs to 236 residues: 2,3,4,5-tetrahydropyridine-2,6-dicarboxylate N-acetyltransferase (236 aa).

This sequence belongs to the transferase hexapeptide repeat family. DapH subfamily.

It carries out the reaction (S)-2,3,4,5-tetrahydrodipicolinate + acetyl-CoA + H2O = L-2-acetamido-6-oxoheptanedioate + CoA. The protein operates within amino-acid biosynthesis; L-lysine biosynthesis via DAP pathway; LL-2,6-diaminopimelate from (S)-tetrahydrodipicolinate (acetylase route): step 1/3. Its function is as follows. Catalyzes the transfer of an acetyl group from acetyl-CoA to tetrahydrodipicolinate. The sequence is that of 2,3,4,5-tetrahydropyridine-2,6-dicarboxylate N-acetyltransferase from Listeria ivanovii.